The chain runs to 448 residues: tRNA modification GTPase MnmE (448 aa).

Residues R24, E81, and K120 each coordinate (6S)-5-formyl-5,6,7,8-tetrahydrofolate. The TrmE-type G domain maps to 216 to 373 (GLNVVLVGAP…LKRTLLREAG (158 aa)). Residue N226 coordinates K(+). GTP-binding positions include 226–231 (NVGKSS), 245–251 (TDIAGTT), and 270–273 (DTAG). S230 contributes to the Mg(2+) binding site. T245, I247, and T250 together coordinate K(+). Residue T251 participates in Mg(2+) binding. K448 contacts (6S)-5-formyl-5,6,7,8-tetrahydrofolate.

Belongs to the TRAFAC class TrmE-Era-EngA-EngB-Septin-like GTPase superfamily. TrmE GTPase family. Homodimer. Heterotetramer of two MnmE and two MnmG subunits. Requires K(+) as cofactor.

Its subcellular location is the cytoplasm. Exhibits a very high intrinsic GTPase hydrolysis rate. Involved in the addition of a carboxymethylaminomethyl (cmnm) group at the wobble position (U34) of certain tRNAs, forming tRNA-cmnm(5)s(2)U34. This is tRNA modification GTPase MnmE from Neisseria meningitidis serogroup C (strain 053442).